A 368-amino-acid chain; its full sequence is Heme A synthase (368 aa).

5 consecutive transmembrane segments (helical) span residues 14-34, 104-124, 129-149, 161-181, and 200-220; these read AVRI…LVGG, VIGI…AIGP, ALWI…WMVA, VRLA…VWTL, and ALAL…VAGL. Position 264 (H264) interacts with heme. 3 helical membrane passes run 266 to 283, 296 to 316, and 318 to 338; these read MLAY…IDAL, FLAL…AAPI, and LALV…LQAE. Heme is bound at residue H322.

Belongs to the COX15/CtaA family. Type 2 subfamily. Interacts with CtaB. The cofactor is heme b.

Its subcellular location is the cell membrane. It carries out the reaction Fe(II)-heme o + 2 A + H2O = Fe(II)-heme a + 2 AH2. The protein operates within porphyrin-containing compound metabolism; heme A biosynthesis; heme A from heme O: step 1/1. In terms of biological role, catalyzes the conversion of heme O to heme A by two successive hydroxylations of the methyl group at C8. The first hydroxylation forms heme I, the second hydroxylation results in an unstable dihydroxymethyl group, which spontaneously dehydrates, resulting in the formyl group of heme A. The protein is Heme A synthase of Rhodopseudomonas palustris (strain ATCC BAA-98 / CGA009).